We begin with the raw amino-acid sequence, 162 residues long: MADTNRAVEKLQGKFEASILEVKQDRGDWIVTVKKEDIVAVLAFLKQECKFDMLTDVTAVDYLGKAADRFMMVYQLTSVPFKDRLRIKAPVAEADCVIGSATQVYGSANWLEREVFDLFGIRFDKHPDLRRILMTPDWEGHPLRKDYPLQGPGREPYKGRLS.

This sequence belongs to the complex I 30 kDa subunit family. In terms of assembly, NDH-1 is composed of 14 different subunits. Subunits NuoB, C, D, E, F, and G constitute the peripheral sector of the complex.

The protein localises to the cell inner membrane. The enzyme catalyses a quinone + NADH + 5 H(+)(in) = a quinol + NAD(+) + 4 H(+)(out). Functionally, NDH-1 shuttles electrons from NADH, via FMN and iron-sulfur (Fe-S) centers, to quinones in the respiratory chain. The immediate electron acceptor for the enzyme in this species is believed to be ubiquinone. Couples the redox reaction to proton translocation (for every two electrons transferred, four hydrogen ions are translocated across the cytoplasmic membrane), and thus conserves the redox energy in a proton gradient. In Trichlorobacter lovleyi (strain ATCC BAA-1151 / DSM 17278 / SZ) (Geobacter lovleyi), this protein is NADH-quinone oxidoreductase subunit C.